Consider the following 305-residue polypeptide: Mitochondrial brown fat uncoupling protein 1 (305 aa).

Residues 1–10 (MVGHAATDVP) are Mitochondrial intermembrane-facing. Residues 11–32 (PTMAVKIFSAGVAACVADIITF) traverse the membrane as a helical segment. 3 Solcar repeats span residues 11 to 102 (PTMA…VQEF), 109 to 199 (ASLG…MKEA), and 208 to 293 (DDVP…LKRE). Residues 33-73 (PLDTAKVRLQIQGECLTSSAFRYKGVLGTIITLAKTEGPVK) lie on the Mitochondrial matrix side of the membrane. Position 56 (lysine 56) interacts with fatty acid 16:0. A helical membrane pass occupies residues 74–96 (LYSGLPAGLQRQISFASLRIGLY). At 97–114 (DTVQEFFTTGKEASLGSK) the chain is on the mitochondrial intermembrane side. A helical transmembrane segment spans residues 115–131 (ISAGLTTGGVAVFIGQP). Residues 132–176 (TEVVKVRLQAQSHLHGPKPRYTGTYNAYRIIATTEGLTGLWKGTT) lie on the Mitochondrial matrix side of the membrane. The chain crosses the membrane as a helical span at residues 177–193 (PNLTRNVIINCTELVTY). Residues 194 to 210 (DLMKEALVKNKLLADDV) lie on the Mitochondrial intermembrane side of the membrane. Residues 211 to 230 (PCHFVSAVVAGFCTTVLSSP) form a helical membrane-spanning segment. Topologically, residues 231–264 (VDVVKTRFVNSSPGQYTSVPNCAMMMLTREGPSA) are mitochondrial matrix. Cysteine sulfenic acid (-SOH) is present on cysteine 252. The chain crosses the membrane as a helical span at residues 265–287 (FFKGFVPSFLRLGSWNIIMFVCF). Residue lysine 267 coordinates fatty acid 16:0. Residues 288–305 (EQLKRELMKSRQAMDCAT) are Mitochondrial intermembrane-facing.

This sequence belongs to the mitochondrial carrier (TC 2.A.29) family. As to quaternary structure, most probably functions as a monomer. Binds one purine nucleotide per monomer. However, has also been suggested to function as a homodimer or a homotetramer. Tightly associates with cardiolipin in the mitochondrion inner membrane; may stabilize and regulate its activity. Post-translationally, may undergo sulfenylation upon cold exposure. May increase the sensitivity of UCP1 thermogenic function to the activation by noradrenaline probably through structural effects. May undergo ubiquitin-mediated proteasomal degradation.

The protein resides in the mitochondrion inner membrane. The catalysed reaction is H(+)(in) = H(+)(out). With respect to regulation, has no constitutive proton transporter activity and has to be activated by long-chain fatty acids/LCFAs. Inhibited by purine nucleotides. Both purine nucleotides and LCFAs bind the cytosolic side of the transporter and directly compete to activate or inhibit it. Activated by noradrenaline and reactive oxygen species. Despite lacking canonical translational encoding for selenocysteine, a small pool of the protein has been observed to selectively incorporate selenocysteine at 'Cys-252'. Selenocysteine-modified protein is highly sensitive to redox modification and may constitute a pool of protein highly sensitive to activation by elevated levels of reactive oxygen species (ROS). Its function is as follows. Mitochondrial protein responsible for thermogenic respiration, a specialized capacity of brown adipose tissue and beige fat that participates in non-shivering adaptive thermogenesis to temperature and diet variations and more generally to the regulation of energy balance. Functions as a long-chain fatty acid/LCFA and proton symporter, simultaneously transporting one LCFA and one proton through the inner mitochondrial membrane. However, LCFAs remaining associated with the transporter via their hydrophobic tails, it results in an apparent transport of protons activated by LCFAs. Thereby, dissipates the mitochondrial proton gradient and converts the energy of substrate oxydation into heat instead of ATP. Regulates the production of reactive oxygen species/ROS by mitochondria. The sequence is that of Mitochondrial brown fat uncoupling protein 1 from Ovis aries (Sheep).